We begin with the raw amino-acid sequence, 370 residues long: Ornithine carbamoyltransferase, mitochondrial (370 aa).

The N-terminal 38 residues, 1–38 (MPSPLRTAPQPPLRAFHNPPALRRLYSSTSHSAATPAT), are a transit peptide targeting the mitochondrion. Carbamoyl phosphate-binding positions include 97 to 100 (STRT), R148, H175, and Q178. N216, D282, S286, and M287 together coordinate L-ornithine. C324 functions as the Proton acceptor in the catalytic mechanism. Carbamoyl phosphate-binding positions include 324–325 (CL) and R351.

Belongs to the aspartate/ornithine carbamoyltransferase superfamily. OTCase family. As to quaternary structure, homotrimer.

It localises to the mitochondrion matrix. The catalysed reaction is carbamoyl phosphate + L-ornithine = L-citrulline + phosphate + H(+). The protein operates within amino-acid biosynthesis; L-arginine biosynthesis; L-arginine from L-ornithine and carbamoyl phosphate: step 1/3. The sequence is that of Ornithine carbamoyltransferase, mitochondrial (argB) from Aspergillus niger.